Reading from the N-terminus, the 661-residue chain is Solute carrier organic anion transporter family member 1A4 (661 aa).

Topologically, residues 1–20 (MGKSEKRVATHGVRCFAKIK) are cytoplasmic. A helical membrane pass occupies residues 21–40 (MFLLALTCAYVSKSLSGTYM). Residues 41–59 (NSMLTQIERQFGIPTSIVG) are Extracellular-facing. The chain crosses the membrane as a helical span at residues 60-80 (LINGSFEIGNLLLIIFVSYFG). Residues 81–86 (TKLHRP) are Cytoplasmic-facing. The chain crosses the membrane as a helical span at residues 87–111 (IMIGVGCAVMGLGCFLISLPHFLMG). Topologically, residues 112 to 154 (QYEYETILPTSNVSSNSFFCVENRSQTLNPTQDPSECVKEMKS) are extracellular. N-linked (GlcNAc...) asparagine glycosylation is found at Asn123 and Asn134. A helical membrane pass occupies residues 155 to 183 (LMWIYVLVGNIIRGIGETPIMPLGISYIE). At 184–202 (DFAKSENSPLYIGILETGM) the chain is on the cytoplasmic side. A helical membrane pass occupies residues 203–223 (TIGPLIGLLLASSCANIYVDI). At 224–241 (ESVNTDDLTITPTDTRWV) the chain is on the extracellular side. The helical transmembrane segment at 242–266 (GAWWIGFLVCAGVNILTSFPFFFFP) threads the bilayer. Topologically, residues 267–310 (KTLPKEGLQENVDGTENAKEKKHRKKAKEEKRGITKDFFVFMKS) are cytoplasmic. Residues 311–332 (LSCNPIYMLFILISVLQFNAFI) traverse the membrane as a helical segment. Topologically, residues 333–352 (NSFTFMPKYLEQQYGKSTAE) are extracellular. A helical transmembrane segment spans residues 353-376 (VVFLMGLYMLPPICLGYLIGGLIM). Residues 377-380 (KKFK) are Cytoplasmic-facing. The chain crosses the membrane as a helical span at residues 381-404 (VTVKKAAHLAFWLCLSEYLLSFLS). The Extracellular segment spans residues 405–512 (YVMTCDNFPV…PDCANKLQYF (108 aa)). The Kazal-like domain occupies 432–487 (NKVLADCNTRCNCSTNTWDPVCGDNGLAYMSACLAGCEKSVGTGTNMVFQNCSCIQ). Intrachain disulfides connect Cys438-Cys468, Cys444-Cys464, and Cys453-Cys485. Asn443 carries N-linked (GlcNAc...) asparagine glycosylation. Asn482 and Asn491 each carry an N-linked (GlcNAc...) asparagine glycan. A helical transmembrane segment spans residues 513 to 535 (LIIAIFGCFIYSLAGIPGYMVLL). Over 536-544 (RCIKSEEKS) the chain is Cytoplasmic. Residues 545 to 570 (LGVGLHAFCIRILAGIPAPIYFGALI) form a helical membrane-spanning segment. Residues 571–604 (DRTCLHWGTLKCGEPGACRMYDINSFRRLYLGLP) lie on the Extracellular side of the membrane. A helical membrane pass occupies residues 605–622 (AALRGASFVPAFFILRLT). The Cytoplasmic portion of the chain corresponds to 623–661 (RTFQFPGDIESSKTDHAEMKLTLKESECTEVLRSKVTED). A phosphoserine mark is found at Ser633 and Ser634.

This sequence belongs to the organo anion transporter (TC 2.A.60) family. As to expression, highly expressed in brain, liver, and kidney but not expressed in heart, spleen, lung, skeletal muscle, and testis.

It localises to the cell membrane. It catalyses the reaction estrone 3-sulfate(out) = estrone 3-sulfate(in). The enzyme catalyses taurocholate(out) = taurocholate(in). The catalysed reaction is prostaglandin E2(out) = prostaglandin E2(in). It carries out the reaction L-thyroxine(out) = L-thyroxine(in). In terms of biological role, mediates the Na(+)-independent transport of organic anions such as taurocholate, cholate, 17-beta-glucuronosyl estradiol, prostaglandin E2, estrone 3-sulfate, L-thyroxine (T4), the cardiac glycosides ouabain and digoxin and thyroid hormones. May play an especially important role in the brain accumulation and toxicity of digoxin and in the hepatobiliary and renal excretion of cardiac glycosides. Shows a pH-sensitive substrate specificity which may be ascribed to the protonation state of the binding site and leads to a stimulation of substrate transport in an acidic microenvironment. Hydrogencarbonate/HCO3(-) acts as the probable counteranion that exchanges for organic anions. The protein is Solute carrier organic anion transporter family member 1A4 (Slco1a4) of Rattus norvegicus (Rat).